Consider the following 251-residue polypeptide: Ubiquinone/menaquinone biosynthesis C-methyltransferase UbiE (251 aa).

S-adenosyl-L-methionine is bound by residues Thr74, Asp95, and 123 to 124; that span reads NA.

This sequence belongs to the class I-like SAM-binding methyltransferase superfamily. MenG/UbiE family.

It carries out the reaction a 2-demethylmenaquinol + S-adenosyl-L-methionine = a menaquinol + S-adenosyl-L-homocysteine + H(+). The enzyme catalyses a 2-methoxy-6-(all-trans-polyprenyl)benzene-1,4-diol + S-adenosyl-L-methionine = a 5-methoxy-2-methyl-3-(all-trans-polyprenyl)benzene-1,4-diol + S-adenosyl-L-homocysteine + H(+). It functions in the pathway quinol/quinone metabolism; menaquinone biosynthesis; menaquinol from 1,4-dihydroxy-2-naphthoate: step 2/2. Its pathway is cofactor biosynthesis; ubiquinone biosynthesis. Methyltransferase required for the conversion of demethylmenaquinol (DMKH2) to menaquinol (MKH2) and the conversion of 2-polyprenyl-6-methoxy-1,4-benzoquinol (DDMQH2) to 2-polyprenyl-3-methyl-6-methoxy-1,4-benzoquinol (DMQH2). This Shewanella piezotolerans (strain WP3 / JCM 13877) protein is Ubiquinone/menaquinone biosynthesis C-methyltransferase UbiE.